Reading from the N-terminus, the 637-residue chain is MGKIIGIDLGTTNSCVAVMQGKDPVVIANAEGYRTTPSMVAFTKSGERLVGHAAKRQAITNATNTIFSIKRFMGRTQDEVPEETKMVPYQIVSEGNQARVKIGDKTHSPQEISAMILQKMKETAEDFLGEKVTEAVITVPAYFNDAQRQATKDAGQIAGLEVKRIINEPTAAALAYGLDKKQSNEKVAVFDLGGGTFDISVLELGDGVFEVRSTDGDTHLGGDNFDQILIDFLADEFKKQEMIDLRKDPMALQRLKEAAEKAKIELSSSAATEVNLPFITATQDGPKHLVVNITRAKFEGLCASLFDRILEPCRRAVKNAKLDVKEIDEVVLVGGSTRIPKVQQLVKEFFGKEPNRSVNPDEVVAVGAAIQGGVLKGDVTDVLLLDVTPLSLGIETLGGVMTKLIEANTTIPTKKQETFSTAADNQTSVEIHILQGERPMSTDNKTLGRFHLDGIPPAPRGVPQIEVAFDIDANGILHVSAKDKATGKEQSVRIEASGKLSETEIEKMKKDASSHADEDKKKKEEVDTKNTADALIFSTEKQINEIGDKLPAENLSKIQAALDRLKEAHKTGNTATIKPAMDALTKEWNEAASKMYGTEAGAPGAAGAAGAAGQGQSASSGKDDEVKNADFEVVDDK.

A Phosphothreonine; by autocatalysis modification is found at Thr-196. 2 disordered regions span residues 484-528 (KATG…EVDT) and 598-637 (TEAGAPGAAGAAGAAGQGQSASSGKDDEVKNADFEVVDDK). Over residues 501–528 (SETEIEKMKKDASSHADEDKKKKEEVDT) the composition is skewed to basic and acidic residues. Residues 600-620 (AGAPGAAGAAGAAGQGQSASS) show a composition bias toward low complexity. Residues 621-637 (GKDDEVKNADFEVVDDK) are compositionally biased toward basic and acidic residues.

This sequence belongs to the heat shock protein 70 family.

Its function is as follows. Acts as a chaperone. The protein is Chaperone protein DnaK of Chloroherpeton thalassium (strain ATCC 35110 / GB-78).